The chain runs to 739 residues: MQTLFLSLLAAAVTVHAYGSGGSNWDQAYSRAKDALQKLNQTEKVGLVTGVKWMGGPCVGNTYKPESIDYPSLCLQDSPLGIRFANPVTAFPAGINAGATWDTQLLYARGAAMGAEAKGLGIHVQLGPVAGPLGKNPNGGRNWEGFSVDPYLSGVAMEKTIRGMQDSGVQACAKHWLGNEQEHYRDTISSNIGDRAAHELYVWPFMDAVKAGVASVMCSYNKVNGTWACESDALNNKLMKEELGFPGYIMSDWNAQHSTVNSAVSGLDMTMPGSDFSNPPGSIFWGSNLEAAVADGSVPQSRLDDMVTRILAAWYLVGQDQGYPPVAFSSWNGGKANVDVTADHGTVARAVARDSIVLLKNGHGTLPLRKPKSLAIVGSDAIVNPAGPNACSDRGCNNGTLAMGWGSGTAEFPYLVGPLDAIQKRAAADGTKIVPSATDDPTAGASAAAAAETAIVFINSDSGEGYITVEGNLGDRNNLDPWHNGNELVKAVAAASKNVIVVIHSVGPIILETILAQPSVKAIVWAGLPGQESGNALVDVIYGDTTPSGKLPYTIAKQAADYGASWINAETDDFPEGLYVDYRHFDAKGIAPRYEFGYGLSYTTFKYSGLWVNMDASAGAANGQVVPGGPADLFEVVGQVSVSVRNNGRVAGAEVAQLYLGLPDSAPATPPKQLRGFQKLMLQPGQTGRATFKLTRRDLSYWDVQQQKWVVPSGTFKVYVGSSSRDIREEGSFRVRRGW.

Residues 1-17 (MQTLFLSLLAAAVTVHA) form the signal peptide. N-linked (GlcNAc...) asparagine glycosylation is found at N40 and N224. D252 is a catalytic residue. An N-linked (GlcNAc...) asparagine glycan is attached at N398.

The protein belongs to the glycosyl hydrolase 3 family.

The protein resides in the secreted. The catalysed reaction is Hydrolysis of terminal, non-reducing beta-D-glucosyl residues with release of beta-D-glucose.. It functions in the pathway glycan metabolism; cellulose degradation. Functionally, beta-glucosidases are one of a number of cellulolytic enzymes involved in the degradation of cellulosic biomass. Catalyzes the last step releasing glucose from the inhibitory cellobiose. In Aspergillus fumigatus (strain ATCC MYA-4609 / CBS 101355 / FGSC A1100 / Af293) (Neosartorya fumigata), this protein is Probable beta-glucosidase L (bglL).